A 292-amino-acid chain; its full sequence is Cyclin-dependent kinase 5 (292 aa).

Residues 4-286 (YEKLEKIGEG…AEEALQHPYF (283 aa)) enclose the Protein kinase domain. Residues 10–18 (IGEGTYGTV) and lysine 33 contribute to the ATP site. Phosphotyrosine; by ABL1, EPHA4 and FYN is present on tyrosine 15. Threonine 17 bears the Phosphothreonine mark. Lysine 56 is subject to N6-acetyllysine. Serine 72 carries the phosphoserine modification. Catalysis depends on aspartate 126, which acts as the Proton acceptor. Phosphoserine is present on serine 159.

It belongs to the protein kinase superfamily. CMGC Ser/Thr protein kinase family. CDC2/CDKX subfamily. Heterodimer composed of a catalytic subunit CDK5 and a regulatory subunit CDK5R1 (p25) and macromolecular complex composed of at least CDK5, CDK5R1 (p35) and CDK5RAP1 or CDK5RAP2 or CDK5RAP3. Only the heterodimer shows kinase activity. Under neurotoxic stress and neuronal injury conditions, p35 is cleaved by calpain to generate p25 that hyperactivates CDK5, that becomes functionally disabled and often toxic. Found in a trimolecular complex with CABLES1 and ABL1. Interacts with CABLES1 and CABLES2. Interacts with AATK and GSTP1. Binds to HDAC1 when in complex with p25. Interaction with myristoylation p35 promotes CDK5 association with membranes. Both isoforms 1 and 2 interacts with beta-catenin/CTNNB1. Interacts with delta-catenin/CTNND2 and APEX1. Interacts with P53/TP53 in neurons. Interacts with EPHA4; may mediate the activation of NGEF by EPHA4. Interacts with PTK2/FAK1. The complex p35/CDK5 interacts with CLOCK. Phosphorylation on Tyr-15 by ABL1 and FYN, and on Ser-159 by casein kinase 1 promotes kinase activity. By contrast, phosphorylation at Thr-14 inhibits activity. In terms of processing, phosphorylation at Ser-159 is essential for maximal catalytic activity.

Its subcellular location is the nucleus. The protein localises to the cytoplasm. It is found in the cell membrane. It localises to the perikaryon. The protein resides in the cell projection. Its subcellular location is the lamellipodium. The protein localises to the growth cone. It is found in the postsynaptic density. It localises to the synapse. It catalyses the reaction L-seryl-[protein] + ATP = O-phospho-L-seryl-[protein] + ADP + H(+). The catalysed reaction is L-threonyl-[protein] + ATP = O-phospho-L-threonyl-[protein] + ADP + H(+). Inhibited by 2-(1-ethyl-2-hydroxyethylamino)-6-benzylamino-9-isopropylpurine (roscovitine), 1-isopropyl-4-aminobenzyl-6-ether-linked benzimidazoles, resveratrol, AT-7519 and olomoucine. Activated by CDK5R1 (p35) and CDK5R2 (p39) during the development of the nervous system; degradation of CDK5R1 (p35) and CDK5R2 (p39) by proteasome result in down regulation of kinase activity, during this process, CDK5 phosphorylates p35 and induces its ubiquitination and subsequent degradation. Kinase activity is mainly determined by the amount of p35 available and subcellular location; reversible association to plasma membrane inhibits activity. Long-term inactivation as well as CDK5R1 (p25)-mediated hyperactivation of CDK5 triggers cell death. The pro-death activity of hyperactivated CDK5 is suppressed by membrane association of CDK5, via myristoylation of p35. Brain-derived neurotrophic factor, glial-derived neurotrophic factor, nerve growth factor (NGF), retinoic acid, laminin and neuregulin promote activity. Neurotoxicity enhances nuclear activity, thus leading to MEF2 phosphorylation and inhibition prior to apoptosis of cortical neurons. Repression by GSTP1 via p25/p35 translocation prevents neurodegeneration. In terms of biological role, proline-directed serine/threonine-protein kinase essential for neuronal cell cycle arrest and differentiation and may be involved in apoptotic cell death in neuronal diseases by triggering abortive cell cycle re-entry. Interacts with D1 and D3-type G1 cyclins. Phosphorylates SRC, NOS3, VIM/vimentin, p35/CDK5R1, MEF2A, SIPA1L1, SH3GLB1, PXN, PAK1, MCAM/MUC18, SEPT5, SYN1, DNM1, AMPH, SYNJ1, CDK16, RAC1, RHOA, CDC42, TONEBP/NFAT5, MAPT/TAU, MAP1B, histone H1, p53/TP53, HDAC1, APEX1, PTK2/FAK1, huntingtin/HTT, ATM, MAP2, NEFH and NEFM. Regulates several neuronal development and physiological processes including neuronal survival, migration and differentiation, axonal and neurite growth, synaptogenesis, oligodendrocyte differentiation, synaptic plasticity and neurotransmission, by phosphorylating key proteins. Negatively regulates the CACNA1B/CAV2.2 -mediated Ca(2+) release probability at hippocampal neuronal soma and synaptic terminals. Activated by interaction with CDK5R1 (p35) and CDK5R2 (p39), especially in postmitotic neurons, and promotes CDK5R1 (p35) expression in an autostimulation loop. Phosphorylates many downstream substrates such as Rho and Ras family small GTPases (e.g. PAK1, RAC1, RHOA, CDC42) or microtubule-binding proteins (e.g. MAPT/TAU, MAP2, MAP1B), and modulates actin dynamics to regulate neurite growth and/or spine morphogenesis. Also phosphorylates exocytosis associated proteins such as MCAM/MUC18, SEPT5, SYN1, and CDK16/PCTAIRE1 as well as endocytosis associated proteins such as DNM1, AMPH and SYNJ1 at synaptic terminals. In the mature central nervous system (CNS), regulates neurotransmitter movements by phosphorylating substrates associated with neurotransmitter release and synapse plasticity; synaptic vesicle exocytosis, vesicles fusion with the presynaptic membrane, and endocytosis. Promotes cell survival by activating anti-apoptotic proteins BCL2 and STAT3, and negatively regulating of JNK3/MAPK10 activity. Phosphorylation of p53/TP53 in response to genotoxic and oxidative stresses enhances its stabilization by preventing ubiquitin ligase-mediated proteasomal degradation, and induces transactivation of p53/TP53 target genes, thus regulating apoptosis. Phosphorylation of p35/CDK5R1 enhances its stabilization by preventing calpain-mediated proteolysis producing p25/CDK5R1 and avoiding ubiquitin ligase-mediated proteasomal degradation. During aberrant cell-cycle activity and DNA damage, p25/CDK5 activity elicits cell-cycle activity and double-strand DNA breaks that precedes neuronal death by deregulating HDAC1. DNA damage triggered phosphorylation of huntingtin/HTT in nuclei of neurons protects neurons against polyglutamine expansion as well as DNA damage mediated toxicity. Phosphorylation of PXN reduces its interaction with PTK2/FAK1 in matrix-cell focal adhesions (MCFA) during oligodendrocytes (OLs) differentiation. Negative regulator of Wnt/beta-catenin signaling pathway. Activator of the GAIT (IFN-gamma-activated inhibitor of translation) pathway, which suppresses expression of a post-transcriptional regulon of proinflammatory genes in myeloid cells; phosphorylates the linker domain of glutamyl-prolyl tRNA synthetase (EPRS) in a IFN-gamma-dependent manner, the initial event in assembly of the GAIT complex. Phosphorylation of SH3GLB1 is required for autophagy induction in starved neurons. Phosphorylation of TONEBP/NFAT5 in response to osmotic stress mediates its rapid nuclear localization. MEF2 is inactivated by phosphorylation in nucleus in response to neurotoxin, thus leading to neuronal apoptosis. APEX1 AP-endodeoxyribonuclease is repressed by phosphorylation, resulting in accumulation of DNA damage and contributing to neuronal death. NOS3 phosphorylation down regulates NOS3-derived nitrite (NO) levels. SRC phosphorylation mediates its ubiquitin-dependent degradation and thus leads to cytoskeletal reorganization. May regulate endothelial cell migration and angiogenesis via the modulation of lamellipodia formation. Involved in dendritic spine morphogenesis by mediating the EFNA1-EPHA4 signaling. The complex p35/CDK5 participates in the regulation of the circadian clock by modulating the function of CLOCK protein: phosphorylates CLOCK at 'Thr-451' and 'Thr-461' and regulates the transcriptional activity of the CLOCK-BMAL1 heterodimer in association with altered stability and subcellular distribution. The chain is Cyclin-dependent kinase 5 from Bos taurus (Bovine).